A 113-amino-acid chain; its full sequence is U11-theraphotoxin-Hhn1a (113 aa).

An N-terminal signal peptide occupies residues 1–21; the sequence is MNTVRVAFLLVFVLAVSLGQA. A propeptide spanning residues 22-74 is cleaved from the precursor; the sequence is DKDENRMEMQEKTEQGKSYLDFAENLLLQKLEELEAKLLEEDSEESRNSRQKR. A disordered region spans residues 61 to 83; it reads EEDSEESRNSRQKRCIGEGVPCD. 3 cysteine pairs are disulfide-bonded: C75/C90, C82/C95, and C89/C110.

Belongs to the neurotoxin 14 (magi-1) family. 01 (HNTX-16) subfamily. In terms of tissue distribution, expressed by the venom gland.

The protein resides in the secreted. Functionally, probable ion channel inhibitor. This is U11-theraphotoxin-Hhn1a from Cyriopagopus hainanus (Chinese bird spider).